We begin with the raw amino-acid sequence, 330 residues long: Cytosolic iron-sulfur protein assembly protein 1 (330 aa).

7 WD repeats span residues 12-53, 56-95, 105-144, 151-190, 195-236, 248-286, and 292-330; these read LYKE…DVLD, AHKK…DRTF, GHEN…EEYE, EHSQ…WECV, GHEG…EDDQ, VHKR…WKVF, and CHGV…EKAA.

Belongs to the WD repeat CIA1 family. In terms of assembly, interacts with NAR1.

It is found in the cytoplasm. Its subcellular location is the nucleus. Essential component of the cytosolic iron-sulfur (Fe/S) protein assembly machinery. Required for the maturation of extramitochondrial Fe/S proteins. This Saccharomyces cerevisiae (strain ATCC 204508 / S288c) (Baker's yeast) protein is Cytosolic iron-sulfur protein assembly protein 1.